A 530-amino-acid chain; its full sequence is UDP-glucuronosyltransferase 2B15 (530 aa).

Residues 1-23 (MSGKWISALLLLQISFCFKSGNC) form the signal peptide. A glycan (N-linked (GlcNAc...) asparagine) is linked at Asn316. The chain crosses the membrane as a helical span at residues 494-510 (VIGFLLSCVAVTVVLAL).

The protein belongs to the UDP-glycosyltransferase family. Post-translationally, N-glycosylated. As to expression, liver. Lower levels seen in the kidney and testis.

Its subcellular location is the endoplasmic reticulum membrane. It catalyses the reaction glucuronate acceptor + UDP-alpha-D-glucuronate = acceptor beta-D-glucuronoside + UDP + H(+). It carries out the reaction 17alpha-estradiol + UDP-alpha-D-glucuronate = 17alpha-estradiol 3-O-(beta-D-glucuronate) + UDP + H(+). The enzyme catalyses 16alpha,17alpha-estriol + UDP-alpha-D-glucuronate = 16alpha,17alpha-estriol 3-O-(beta-D-glucuronate) + UDP + H(+). The catalysed reaction is 17beta-hydroxy-5alpha-androstan-3-one + UDP-alpha-D-glucuronate = 5alpha-dihydrotestosterone 17-O-(beta-D-glucuronate) + UDP + H(+). In terms of biological role, UDP-glucuronosyltransferase (UGT) that catalyzes phase II biotransformation reactions in which lipophilic substrates are conjugated with glucuronic acid to increase the metabolite's water solubility, thereby facilitating excretion into either the urine or bile. Essential for the elimination and detoxification of drugs, xenobiotics and endogenous compounds. Catalyzes the glucuronidation of endogenous steroid hormones such as androgens (testosterone, androsterone) and estrogens (estradiol, epiestradiol, estriol, catechol estrogens). Displays glucuronidation activity toward several classes of xenoblotic substrates, including phenolic compounds (eugenol, 4-nitrophenol, 4-hydroxybiphenyl) and phenylpropanoids (naringenin, coumarins). Catalyzes the glucuronidation of monoterpenoid alcohols such as borneol, menthol and isomenthol, a class of natural compounds used in essential oils. The sequence is that of UDP-glucuronosyltransferase 2B15 from Rattus norvegicus (Rat).